The primary structure comprises 215 residues: Thiamine-phosphate synthase (215 aa).

4-amino-2-methyl-5-(diphosphooxymethyl)pyrimidine contacts are provided by residues 42–46 (QYREK) and D77. D78 and D97 together coordinate Mg(2+). S116 lines the 4-amino-2-methyl-5-(diphosphooxymethyl)pyrimidine pocket. 143–145 (TKS) lines the 2-[(2R,5Z)-2-carboxy-4-methylthiazol-5(2H)-ylidene]ethyl phosphate pocket. K146 lines the 4-amino-2-methyl-5-(diphosphooxymethyl)pyrimidine pocket. 2-[(2R,5Z)-2-carboxy-4-methylthiazol-5(2H)-ylidene]ethyl phosphate is bound by residues G174 and 194-195 (IS).

This sequence belongs to the thiamine-phosphate synthase family. It depends on Mg(2+) as a cofactor.

It catalyses the reaction 2-[(2R,5Z)-2-carboxy-4-methylthiazol-5(2H)-ylidene]ethyl phosphate + 4-amino-2-methyl-5-(diphosphooxymethyl)pyrimidine + 2 H(+) = thiamine phosphate + CO2 + diphosphate. The enzyme catalyses 2-(2-carboxy-4-methylthiazol-5-yl)ethyl phosphate + 4-amino-2-methyl-5-(diphosphooxymethyl)pyrimidine + 2 H(+) = thiamine phosphate + CO2 + diphosphate. The catalysed reaction is 4-methyl-5-(2-phosphooxyethyl)-thiazole + 4-amino-2-methyl-5-(diphosphooxymethyl)pyrimidine + H(+) = thiamine phosphate + diphosphate. It participates in cofactor biosynthesis; thiamine diphosphate biosynthesis; thiamine phosphate from 4-amino-2-methyl-5-diphosphomethylpyrimidine and 4-methyl-5-(2-phosphoethyl)-thiazole: step 1/1. Condenses 4-methyl-5-(beta-hydroxyethyl)thiazole monophosphate (THZ-P) and 2-methyl-4-amino-5-hydroxymethyl pyrimidine pyrophosphate (HMP-PP) to form thiamine monophosphate (TMP). This chain is Thiamine-phosphate synthase, found in Limosilactobacillus reuteri (strain DSM 20016) (Lactobacillus reuteri).